The sequence spans 208 residues: Large ribosomal subunit protein uL3 (208 aa).

The residue at position 149 (Gln149) is an N5-methylglutamine.

Belongs to the universal ribosomal protein uL3 family. Part of the 50S ribosomal subunit. Forms a cluster with proteins L14 and L19. Methylated by PrmB.

One of the primary rRNA binding proteins, it binds directly near the 3'-end of the 23S rRNA, where it nucleates assembly of the 50S subunit. This Haemophilus ducreyi (strain 35000HP / ATCC 700724) protein is Large ribosomal subunit protein uL3.